We begin with the raw amino-acid sequence, 362 residues long: Solute carrier family 25 member 3 (362 aa).

Residues 1-49 (MFSSVAHLARANPFNTPHLQLVHDGLGDLRSSSPGPTGQPRRPRNLAAA) constitute a mitochondrion transit peptide. Residues 50–63 (AVEEQYSCDYGSGR) lie on the Mitochondrial intermembrane side of the membrane. Solcar repeat units lie at residues 63–147 (RFFI…FKVL), 160–244 (WRTS…TVEA), and 261–339 (EQLV…VKVY). A helical transmembrane segment spans residues 64–86 (FFILCGLGGIISCGTTHTALVPL). Residues 87–121 (DLVKCRMQVDPQKYKGIFNGFSVTLKEDGVRGLAK) lie on the Mitochondrial matrix side of the membrane. Lys99 bears the N6-acetyllysine mark. Residue Lys112 is modified to N6-methyllysine. The helical transmembrane segment at 122–141 (GWAPTFLGYSMQGLCKFGFY) threads the bilayer. The Mitochondrial intermembrane segment spans residues 142–161 (EVFKVLYSNMLGEENTYLWR). A helical transmembrane segment spans residues 162 to 183 (TSLYLAASASAEFFADIALAPM). At 184–218 (EAAKVRIQTQPGYANTLRDAAPKMYKEEGLKAFYK) the chain is on the mitochondrial matrix side. A Phosphotyrosine modification is found at Tyr196. Position 209 is an N6-acetyllysine (Lys209). Residues 219-238 (GVAPLWMRQIPYTMMKFACF) traverse the membrane as a helical segment. Residues 239–261 (ERTVEALYKFVVPKPRSECSKPE) lie on the Mitochondrial intermembrane side of the membrane. Residues 262-284 (QLVVTFVAGYIAGVFCAIVSHPA) form a helical membrane-spanning segment. The Mitochondrial matrix portion of the chain corresponds to 285-314 (DSVVSVLNKEKGSSASLVLKRLGFKGVWKG). A helical transmembrane segment spans residues 315-333 (LFARIIMIGTLTALQWFIY). Residues 334–362 (DSVKVYFRLPRPPPPEMPESLKKKLGLTQ) are Mitochondrial intermembrane-facing.

It belongs to the mitochondrial carrier (TC 2.A.29) family. Interacts with PPIF; the interaction is impaired by CsA.

It is found in the mitochondrion inner membrane. It catalyses the reaction phosphate(in) + H(+)(in) = phosphate(out) + H(+)(out). Its function is as follows. Inorganic ion transporter that transports phosphate or copper ions across the mitochondrial inner membrane into the matrix compartment. Mediates proton-coupled symport of phosphate ions necessary for mitochondrial oxidative phosphorylation of ADP to ATP. Transports copper ions probably in the form of anionic copper(I) complexes to maintain mitochondrial matrix copper pool and to supply copper for cytochrome C oxidase complex assembly. May also play a role in regulation of the mitochondrial permeability transition pore (mPTP). The chain is Solute carrier family 25 member 3 from Homo sapiens (Human).